The sequence spans 364 residues: UDP-N-acetylglucosamine--N-acetylmuramyl-(pentapeptide) pyrophosphoryl-undecaprenol N-acetylglucosamine transferase (364 aa).

Residues 10-12 (TAG), Asn-124, Arg-161, Ser-195, and Gln-291 contribute to the UDP-N-acetyl-alpha-D-glucosamine site.

The protein belongs to the glycosyltransferase 28 family. MurG subfamily.

It is found in the cell membrane. It carries out the reaction di-trans,octa-cis-undecaprenyl diphospho-N-acetyl-alpha-D-muramoyl-L-alanyl-D-glutamyl-meso-2,6-diaminopimeloyl-D-alanyl-D-alanine + UDP-N-acetyl-alpha-D-glucosamine = di-trans,octa-cis-undecaprenyl diphospho-[N-acetyl-alpha-D-glucosaminyl-(1-&gt;4)]-N-acetyl-alpha-D-muramoyl-L-alanyl-D-glutamyl-meso-2,6-diaminopimeloyl-D-alanyl-D-alanine + UDP + H(+). Its pathway is cell wall biogenesis; peptidoglycan biosynthesis. Cell wall formation. Catalyzes the transfer of a GlcNAc subunit on undecaprenyl-pyrophosphoryl-MurNAc-pentapeptide (lipid intermediate I) to form undecaprenyl-pyrophosphoryl-MurNAc-(pentapeptide)GlcNAc (lipid intermediate II). The polypeptide is UDP-N-acetylglucosamine--N-acetylmuramyl-(pentapeptide) pyrophosphoryl-undecaprenol N-acetylglucosamine transferase (Streptomyces coelicolor (strain ATCC BAA-471 / A3(2) / M145)).